We begin with the raw amino-acid sequence, 88 residues long: Gene 85 protein (88 aa).

This is Gene 85 protein (85) from Mycobacterium phage L5 (Mycobacteriophage L5).